The primary structure comprises 353 residues: Spermidine/putrescine import ATP-binding protein PotA (353 aa).

Residues 7–237 (IRFERVTKEY…PINRFVADFI (231 aa)) form the ABC transporter domain. An ATP-binding site is contributed by 39 to 46 (GPSGCGKT).

Belongs to the ABC transporter superfamily. Spermidine/putrescine importer (TC 3.A.1.11.1) family. In terms of assembly, the complex is composed of two ATP-binding proteins (PotA), two transmembrane proteins (PotB and PotC) and a solute-binding protein (PotD).

The protein localises to the cell membrane. It catalyses the reaction ATP + H2O + polyamine-[polyamine-binding protein]Side 1 = ADP + phosphate + polyamineSide 2 + [polyamine-binding protein]Side 1.. Part of the ABC transporter complex PotABCD involved in spermidine/putrescine import. Responsible for energy coupling to the transport system. This is Spermidine/putrescine import ATP-binding protein PotA from Geobacillus kaustophilus (strain HTA426).